A 152-amino-acid polypeptide reads, in one-letter code: Ribosome maturation factor RimP (152 aa).

This sequence belongs to the RimP family.

The protein resides in the cytoplasm. Its function is as follows. Required for maturation of 30S ribosomal subunits. The protein is Ribosome maturation factor RimP of Alkalilimnicola ehrlichii (strain ATCC BAA-1101 / DSM 17681 / MLHE-1).